The following is a 506-amino-acid chain: Pleckstrin homology domain-containing family D member 1 (506 aa).

The PH domain maps to 28–136 (KVQLYGVLWK…WLEMLQESGK (109 aa)). Residues 146–391 (EAMIKSLEAQ…KVRNKEKEER (246 aa)) are a coiled coil. An Omega-N-methylarginine modification is found at arginine 503.

This sequence belongs to the PLEKHD1 family.

The protein is Pleckstrin homology domain-containing family D member 1 (PLEKHD1) of Homo sapiens (Human).